The primary structure comprises 276 residues: Hydroxyethylthiazole kinase (276 aa).

Arginine 126 and serine 172 together coordinate ATP. Glycine 199 provides a ligand contact to substrate.

This sequence belongs to the Thz kinase family. It depends on Mg(2+) as a cofactor.

It catalyses the reaction 5-(2-hydroxyethyl)-4-methylthiazole + ATP = 4-methyl-5-(2-phosphooxyethyl)-thiazole + ADP + H(+). It participates in cofactor biosynthesis; thiamine diphosphate biosynthesis; 4-methyl-5-(2-phosphoethyl)-thiazole from 5-(2-hydroxyethyl)-4-methylthiazole: step 1/1. Its function is as follows. Catalyzes the phosphorylation of the hydroxyl group of 4-methyl-5-beta-hydroxyethylthiazole (THZ). The sequence is that of Hydroxyethylthiazole kinase from Burkholderia pseudomallei (strain 1710b).